We begin with the raw amino-acid sequence, 3036 residues long: MHLHQVLTGAVNPGDNCYSVGSVGDVPFTAYGSGCDIVILANDFECVQIIPGAKHGNIQVSCVECSNQQGRIAASYGNAVCIFEPLGINSHKRNCQLKCQWLKTGQFFLSSVTYNLAWDPQDNRLLTATDSIQLWAPPGDDILEEEEEIDNTVPPVLNDWKCVWQCKTSVSVHLMEWSPDGEYFATAGKDDCLLKVWYPMTGWKSSIIPQDHHEVKRRQSSTQFSFVYLAHPRAVTGFSWRKTSKYMPRGSVCNVLLTSCHDGVCRLWAETLLPEDCLLGEQICETTTSSIASSLSHAGRHKDRIQHALETIHHLKNLRKGQRRSSVLVTHAELMPDQTAMHEVQRHISHHANALCHFHIAASINPATDIPNVLVGTAFNVDDGNGGFVVHWLNNKEFHFTSSTEVFMHQLRKLSDKQVDHENDDADREDEEHSQEDRERGLHMKLDHDLSLDRESEAGTGSSEHEDGEREGSPRTYSRLSVPMPLPTVLLDRKIETLLTEWNKNPDMLFTIHPVDGTFLVWHVKYLDEYNPGIFRQVQVSFSSRIPVAFPSGDASSLSKNIMMYACINATKDSHHTLLHQEGMSVGSPHGSQPHSRSHSTHMNILAPTVMMISKHIDGSLNQWAVTFADKSAFTTVLTVSHKFRYCGHRFHLNDLACHSVLPLLLTSSHHNALLTPELDCQWDSDNKLSRLMDPVKHIKGSSKQPLRNAATRTFHDPNAIYSELILWRVDPIGPLSYTGGVSELARINSLHTSAFSNVAWLPTLIPSYCLGTYCNSASACFVASDGKNLRLYQAVVDARKLLDELSDPESSKLIGEVFNIVSQQSTARPGCIIELDAITNQCGSNTQLLHVFQEDFIIGYKPHKEDMEKKETEIFFQPSQGYRPPPFSEKFFLVVIEKDSNNNSILHMWHLHLKSVQACLAKASEGASSESLLSVPGQKNVDSSPETSPSVSPMPHSSSIANLQTASKLILSSRLVYSQPLDLPESVEVIRATPSAGHLSSSSIYPVCLAPYLVVTTCSDNKVRFWKCCMEANPECNKSDEKEIYHWKRWPLMNDEGEDNSSTVSIVGRPVAVSCSYTGRLAVAYKQPIHHNGFVSKEFSMHVCIFECESTGGSEWVLEQTIHLDDLVKVGSVLDSRVSVDSNLFVYSKSDALLSKDRYLIPNIKHLVHLDWVSKEDGSHILTVGVGANIFMYGRLSGIVTEQTNSKDGVAVITLPLGGSIKQGVKSRWVLLRSIDLVSSVDGTPSLPVSLSWVRDGILVVGMDCEMHVYAQWKHAVKFGDTEADSSNAEEAAMQDHSTFKSNMLARKSVVEGTAISDDVFCSPTVIQDGGLFEAAHVLSPTLPQYHPTQLLELMDLGKVRRAKAILSHLVKCIAGEVAIVRDPDAGEGTKRHLSRTISVSGSTAKETVTVGKDGTRDYTEIDSIPPLPLYALLAADQDTSYRISEESTKIPQSYEDQTVSQPEDQYSELFQIQDIPTDDIDLEPEKRENKSKVINLSQYGPAYFGQEHARVLSSHLMHSSLPGLTRLEQMFLVALADTVATTSTELDESRDKSCSGRDTLDECGLRYLLAMRLHTCLLTSLPPLYRVQLLHQGVSTCHFAWAFHSEAEEELINMIPAIQRGDPQWSELRAMGIGWWVRNINTLRRCIEKVAKASFQRNNDALDAALFYLSMKKKAVVWGLFRSQHDEKMTTFFSHNFNEDRWRKAALKNAFSLLGKQRFEQSAAFFLLAGSLKDAIEVCLEKMEDIQLAMVIARLYESEFETSSTYISILNQKILGCQKDGSGFSCKRLHPDPFLRSLAYWVMKDYTRALDTLLEQTPKEDDEHQVIIKSCNPVAFSFYNYLRTHPLLIRRNLASPEGTLATLGLKTEKNFVDKINLIERKLFFTTANAHFKVGCPVLALEVLSKIPKVTKTSALSAKKDQPDFISHRMDDVPSHSKALSDGNGSSGIEWSNVTSSQYDWSQPIVKVDEEPLNLDWGEDHDSALDEEEDDAVGLVMKSTDAREKDKQSDQKASDPNMLLTPQEEDDPEGDTEVDVIAEQLKFRACLKILMTELRTLATGYEVDGGKLRFQLYNWLEKEIAALHEICNHESVIKEYSSKTYSKVESDLLDQEEMVDKPDIGSYERHQIERRRLQAKREHAERRKSWLQKNQDLLRVFLSYCSLHGAQGGGLASVRMELKFLLQESQQETTVKQLQSPLPLPTTLPLLSASIASTKTVIANPVLYLNNHIHDILYTIVQMKTPPHPSIEDVKVHTLHSLAASLSASIYQALCDSHSYSQTEGNQFTGMAYQGLLLSDRRRLRTESIEEHATPNSSPAQWPGVSSLINLLSSAQDEDQPKLNILLCEAVVAVYLSLLIHALATNSSSELFRLAAHPLNNRMWAAVFGGGVKLVVKPRRQSENISAPPVLSEDIDKHRRRFNMRMLVPGRPVKDATPPPVPAERPSYKEKFIPPELSMWDYFVAKPFLPLSDSGVIYDSDESIHSDEEDDAFFSDTQIQEHQDPNSYSWALLHLTMVKLALHNVKNFFPIAGLEFSELPVTSPLGIAVIKNLENWEQILQEKMDQFEGPPPNYINTYPTDLSVGAGPAILRNKAMLEPENTPFKSRDSSAFPVKRLWHFLVKQEVLQETFIRYIFTKKRKQSEVEADLGYPGGKAKVIHKESDMIMAFSVNKANCNEIVLASTHDVQELDVTSLLACQSYIWIGEEYDRESKSSDDVDYRGSTTTLYQPSATSYSASQVHPPSSLPWLGTGQTSTGASVLMKRNLHNVKRMTSHPVHQYYLTGAQDGSVRMFEWTRPQQLVCFRQAGNARVTRLYFNSQGNKCGVADGEGFLSIWQVNQTASNPKPYMSWQCHSKATSDFAFITSSSLVATSGHSNDNRNVCLWDTLISPGNSLIHGFTCHDHGATVLQYAPKQQLLISGGRKGHVCIFDIRQRQLIHTFQAHDSAIKALALDPYEEYFTTGSAEGNIKVWRLTGHGLIHSFKSEHAKQSIFRNIGAGVMQIDIIQGNRLFSCGADGTLKTRVLPNAFNIPNRILDIL.

WD repeat units follow at residues 108 to 145 (FLSSVTYNLAWDPQDNRLLTATDSIQLWAPPGDDILEE), 167 to 207 (KTSV…KSSI), and 230 to 278 (AHPR…EDCL). S326 carries the phosphoserine modification. The segment at 417–480 (KQVDHENDDA…EGSPRTYSRL (64 aa)) is disordered. Over residues 422–434 (ENDDADREDEEHS) the composition is skewed to acidic residues. The segment covering 435-473 (QEDRERGLHMKLDHDLSLDRESEAGTGSSEHEDGEREGS) has biased composition (basic and acidic residues). Position 473 is a phosphoserine (S473). The WD 4 repeat unit spans residues 492-532 (DRKIETLLTEWNKNPDMLFTIHPVDGTFLVWHVKYLDEYNP). At S588 the chain carries Phosphoserine. WD repeat units lie at residues 595–634 (HSRSHSTHMNILAPTVMMISKHIDGSLNQWAVTFADKSAF), 751–803 (LHTS…RKLL), and 878–920 (QPSQ…VQAC). Residues 932 to 959 (SLLSVPGQKNVDSSPETSPSVSPMPHSS) form a disordered region. Phosphoserine occurs at positions 944 and 945. Positions 949 to 959 (SPSVSPMPHSS) are enriched in low complexity. A WD 8 repeat occupies 1000–1037 (LSSSSIYPVCLAPYLVVTTCSDNKVRFWKCCMEANPEC). Residues S1140, S1143, and S1151 each carry the phosphoserine modification. WD repeat units follow at residues 1163–1204 (PNIK…VTEQ) and 1244–1281 (GTPSLPVSLSWVRDGILVVGMDCEMHVYAQWKHAVKFG). Residues S1287 and S1400 each carry the phosphoserine modification. Residue T1417 is modified to Phosphothreonine. Residue S1857 is modified to Phosphoserine. Positions 1927 to 1936 (ISHRMDDVPS) are enriched in basic and acidic residues. Residues 1927–1952 (ISHRMDDVPSHSKALSDGNGSSGIEW) form a disordered region. The residue at position 1984 (S1984) is a Phosphoserine. Residues 1999–2033 (KSTDAREKDKQSDQKASDPNMLLTPQEEDDPEGDT) are disordered. Over residues 2001–2014 (TDAREKDKQSDQKA) the composition is skewed to basic and acidic residues. Phosphothreonine is present on T2022. Acidic residues predominate over residues 2024–2033 (QEEDDPEGDT). Residues 2122–2153 (GSYERHQIERRRLQAKREHAERRKSWLQKNQD) are a coiled coil. Residues S2399 and S2640 each carry the phosphoserine modification. WD repeat units lie at residues 2761 to 2800 (RNLHNVKRMTSHPVHQYYLTGAQDGSVRMFEWTRPQQLVC), 2804 to 2843 (AGNARVTRLYFNSQGNKCGVADGEGFLSIWQVNQTASNPK), 2850 to 2892 (CHSK…GNSL), 2898 to 2937 (CHDHGATVLQYAPKQQLLISGGRKGHVCIFDIRQRQLIHT), 2940 to 2979 (AHDSAIKALALDPYEEYFTTGSAEGNIKVWRLTGHGLIHS), and 2992 to 3030 (NIGAGVMQIDIIQGNRLFSCGADGTLKTRVLPNAFNIPN).

Interacts with MADD and RAB3GAP.

The protein resides in the cytoplasmic vesicle. It is found in the secretory vesicle. It localises to the synaptic vesicle membrane. Its subcellular location is the neuronal dense core vesicle. Functionally, may serve as a scaffold protein for MADD and RAB3GA on synaptic vesicles. Plays a role in the brain as a key controller of neuronal and endocrine homeostatic processes. The protein is DmX-like protein 2 (DMXL2) of Homo sapiens (Human).